The sequence spans 328 residues: 6-phosphogluconolactonase (328 aa).

The protein belongs to the cycloisomerase 2 family.

The catalysed reaction is 6-phospho-D-glucono-1,5-lactone + H2O = 6-phospho-D-gluconate + H(+). It functions in the pathway carbohydrate degradation; pentose phosphate pathway; D-ribulose 5-phosphate from D-glucose 6-phosphate (oxidative stage): step 2/3. Its function is as follows. Catalyzes the hydrolysis of 6-phosphogluconolactone to 6-phosphogluconate. In Photorhabdus laumondii subsp. laumondii (strain DSM 15139 / CIP 105565 / TT01) (Photorhabdus luminescens subsp. laumondii), this protein is 6-phosphogluconolactonase.